Reading from the N-terminus, the 355-residue chain is Peptide chain release factor 1 (355 aa).

Glutamine 234 bears the N5-methylglutamine mark.

This sequence belongs to the prokaryotic/mitochondrial release factor family. Post-translationally, methylated by PrmC. Methylation increases the termination efficiency of RF1.

It localises to the cytoplasm. Peptide chain release factor 1 directs the termination of translation in response to the peptide chain termination codons UAG and UAA. The polypeptide is Peptide chain release factor 1 (Metamycoplasma arthritidis (strain 158L3-1) (Mycoplasma arthritidis)).